The sequence spans 131 residues: Small ribosomal subunit protein uS11 (131 aa).

The protein belongs to the universal ribosomal protein uS11 family. Part of the 30S ribosomal subunit. Interacts with proteins S7 and S18. Binds to IF-3.

In terms of biological role, located on the platform of the 30S subunit, it bridges several disparate RNA helices of the 16S rRNA. Forms part of the Shine-Dalgarno cleft in the 70S ribosome. The chain is Small ribosomal subunit protein uS11 from Clostridium acetobutylicum (strain ATCC 824 / DSM 792 / JCM 1419 / IAM 19013 / LMG 5710 / NBRC 13948 / NRRL B-527 / VKM B-1787 / 2291 / W).